The following is a 202-amino-acid chain: Oligoribonuclease (202 aa).

Positions 2–166 (LVWIDCEMTG…ADIQESIEEL (165 aa)) constitute an Exonuclease domain. Tyrosine 123 is a catalytic residue.

The protein belongs to the oligoribonuclease family.

The protein resides in the cytoplasm. Functionally, 3'-to-5' exoribonuclease specific for small oligoribonucleotides. The sequence is that of Oligoribonuclease from Cutibacterium acnes (strain DSM 16379 / KPA171202) (Propionibacterium acnes).